Consider the following 293-residue polypeptide: Large ribosomal RNA subunit accumulation protein YCED homolog 1, chloroplastic (293 aa).

Residues 1–42 constitute a chloroplast transit peptide; the sequence is MYYPQPTVSLAAAVALLRPSLRRHSQRASSLLRSSTPPPWVS.

Belongs to the DUF177 domain family. Highly expressed in shoots and leaves. Detected in roots, embryos and endosperm.

Its subcellular location is the plastid. It is found in the chloroplast. Functionally, plays a role in synthesis, processing and/or stability of 23S rRNA. Required for embryogenesis. May be involved in RPL23 transcript levels regulation in non-photosynthetic plastids. This Zea mays (Maize) protein is Large ribosomal RNA subunit accumulation protein YCED homolog 1, chloroplastic.